We begin with the raw amino-acid sequence, 191 residues long: dTTP/UTP pyrophosphatase (191 aa).

Aspartate 69 functions as the Proton acceptor in the catalytic mechanism.

The protein belongs to the Maf family. YhdE subfamily. A divalent metal cation is required as a cofactor.

Its subcellular location is the cytoplasm. The catalysed reaction is dTTP + H2O = dTMP + diphosphate + H(+). It catalyses the reaction UTP + H2O = UMP + diphosphate + H(+). Functionally, nucleoside triphosphate pyrophosphatase that hydrolyzes dTTP and UTP. May have a dual role in cell division arrest and in preventing the incorporation of modified nucleotides into cellular nucleic acids. This is dTTP/UTP pyrophosphatase from Desulforamulus reducens (strain ATCC BAA-1160 / DSM 100696 / MI-1) (Desulfotomaculum reducens).